Consider the following 371-residue polypeptide: MDKKDMEREFYMTGGDGKTSYARNSSLQKKASDTAKHITLETLQQLYKETRPKSLGIADLGCSSGPNTLSTITDFIKTVQVAHHREIPIQPLPEFSIFLNDLPGNDFNFIFKSLPDFHIELKRDNNNGDCPSVFIAAYPGSFYGRLFPENTIHFVYASHSLHWLSKVPTALYDEQGKSINKGCVSICSLSSEAVSKAYCSQFKEDFSIFLRCRSKEMVSAGRMVLIILGREGPDHVDRGNSFFWELLSRSIADLVAQGETEEEKLDSYDMHFYAPSADEIEGEVDKEGSFELERLEMLEVKKDKGNTEGDISYGKAVAKTVRAVQESMLVQHFGEKILDKLFDTYCRMVDDELAKEDIRPITFVVVLRKKL.

Position 21 (Tyr-21) interacts with S-adenosyl-L-homocysteine. Gln-28 contributes to the (11R)-carlactonoate binding site. Residues Cys-62, Asn-67, Asp-101, Leu-102, Ser-141, and Phe-142 each coordinate S-adenosyl-L-homocysteine. The (11R)-carlactonoate site is built by His-162 and Trp-163. Positions 180, 266, 268, and 269 each coordinate Mg(2+).

The protein belongs to the methyltransferase superfamily. Type-7 methyltransferase family. SABATH subfamily. In terms of assembly, homodimer. It depends on Mg(2+) as a cofactor.

It carries out the reaction (11R)-carlactonoate + S-adenosyl-L-methionine = (11R)-methyl carlactonoate + S-adenosyl-L-homocysteine. Functionally, methyltransferase involved in the biosynthesis of strigolactone natural products, bioactive compounds promoting plant fitness and soil microbe interactions, but preventing shoot branching. Catalyzes the biosynthesis of (11R)-methyl carlactonoate (MeCLA) from (11R)-carlactonoate (CLA), downstream of MAX1; MeCLA is probably biologically active as a hormone regulating shoot branching and serves as a precursor of non-canonical strigolactones (SLs). This is Carlactonoate CLA methyltransferase from Arabidopsis thaliana (Mouse-ear cress).